We begin with the raw amino-acid sequence, 499 residues long: Lysine--tRNA ligase (499 aa).

Positions 410 and 417 each coordinate Mg(2+).

Belongs to the class-II aminoacyl-tRNA synthetase family. Homodimer. Requires Mg(2+) as cofactor.

It is found in the cytoplasm. The enzyme catalyses tRNA(Lys) + L-lysine + ATP = L-lysyl-tRNA(Lys) + AMP + diphosphate. This chain is Lysine--tRNA ligase (lysS), found in Bacillus subtilis (strain 168).